A 601-amino-acid polypeptide reads, in one-letter code: A-type ATP synthase subunit A (601 aa).

235 to 242 (GGFGTGKT) lines the ATP pocket.

Belongs to the ATPase alpha/beta chains family. Has multiple subunits with at least A(3), B(3), C, D, E, F, H, I and proteolipid K(x).

The protein localises to the cell membrane. It carries out the reaction ATP + H2O + 4 H(+)(in) = ADP + phosphate + 5 H(+)(out). Component of the A-type ATP synthase that produces ATP from ADP in the presence of a proton gradient across the membrane. The A chain is the catalytic subunit. The sequence is that of A-type ATP synthase subunit A from Thermofilum pendens (strain DSM 2475 / Hrk 5).